Reading from the N-terminus, the 143-residue chain is Small ribosomal subunit protein uS9 (143 aa).

Residues 123 to 143 form a disordered region; that stretch reads RPEPKKFGGRGARSRFQKSYR. Over residues 134–143 the composition is skewed to basic residues; sequence ARSRFQKSYR.

Belongs to the universal ribosomal protein uS9 family.

This chain is Small ribosomal subunit protein uS9 (RPS16), found in Kluyveromyces lactis (strain ATCC 8585 / CBS 2359 / DSM 70799 / NBRC 1267 / NRRL Y-1140 / WM37) (Yeast).